Here is a 197-residue protein sequence, read N- to C-terminus: MLSSLAPYMANPRQTLTQVLNFALVLSTAFMLWKGLSVITNSTSPIVVVLSGSMEPAFQRGDLLFLWNRSPRVDVGEIVVYNVRGKDIPIVHRVMRSFPELPGREDKKNVKKGGEEGEETSSTPSQKLLTKGDNNMADDTELYAQGQEYLDRKEDIVGSVRGYVPTVGYVTILLSEHPWLRSVLLGFMGLMVVLQRE.

At 1-14 the chain is on the cytoplasmic side; the sequence is MLSSLAPYMANPRQ. Residues 15 to 33 traverse the membrane as a helical; Signal-anchor for type II membrane protein segment; the sequence is TLTQVLNFALVLSTAFMLW. Topologically, residues 34–197 are lumenal; the sequence is KGLSVITNST…MGLMVVLQRE (164 aa). Residue asparagine 41 is glycosylated (N-linked (GlcNAc...) asparagine). Catalysis depends on charge relay system residues serine 53 and histidine 92. Residues 102 to 115 are compositionally biased toward basic and acidic residues; that stretch reads PGREDKKNVKKGGE. The disordered stretch occupies residues 102 to 134; sequence PGREDKKNVKKGGEEGEETSSTPSQKLLTKGDN. Residue aspartate 139 is the Charge relay system of the active site. The segment at 183-194 is C-terminal short (CTS) helix; that stretch reads VLLGFMGLMVVL.

It belongs to the peptidase S26B family. Component of the signal peptidase complex (SPC) composed of a catalytic subunit SEC11 and three accessory subunits SPC1, SPC2 and SPC3. The complex induces a local thinning of the ER membrane which is used to measure the length of the signal peptide (SP) h-region of protein substrates. This ensures the selectivity of the complex towards h-regions shorter than 18-20 amino acids. SPC associates with the translocon complex.

It localises to the endoplasmic reticulum membrane. The enzyme catalyses Cleavage of hydrophobic, N-terminal signal or leader sequences from secreted and periplasmic proteins.. Catalytic component of the signal peptidase complex (SPC) which catalyzes the cleavage of N-terminal signal sequences from nascent proteins as they are translocated into the lumen of the endoplasmic reticulum. Specifically cleaves N-terminal signal peptides that contain a hydrophobic alpha-helix (h-region) shorter than 18-20 amino acids. This Paracoccidioides brasiliensis (strain Pb18) protein is Signal peptidase complex catalytic subunit SEC11 (SEC11).